The primary structure comprises 338 residues: Glyceraldehyde-3-phosphate dehydrogenase (338 aa).

Residues 11-12 (TI) and G109 contribute to the NAD(+) site. 138 to 140 (SCN) contacts D-glyceraldehyde 3-phosphate. C139 serves as the catalytic Nucleophile. R167 serves as a coordination point for NAD(+). Residues T169 and 192 to 193 (HA) contribute to the D-glyceraldehyde 3-phosphate site. Q299 provides a ligand contact to NAD(+).

It belongs to the glyceraldehyde-3-phosphate dehydrogenase family. In terms of assembly, homotetramer.

The protein localises to the cytoplasm. The catalysed reaction is D-glyceraldehyde 3-phosphate + phosphate + NADP(+) = (2R)-3-phospho-glyceroyl phosphate + NADPH + H(+). It catalyses the reaction D-glyceraldehyde 3-phosphate + phosphate + NAD(+) = (2R)-3-phospho-glyceroyl phosphate + NADH + H(+). It participates in carbohydrate degradation; glycolysis; pyruvate from D-glyceraldehyde 3-phosphate: step 1/5. This chain is Glyceraldehyde-3-phosphate dehydrogenase, found in Thermoplasma volcanium (strain ATCC 51530 / DSM 4299 / JCM 9571 / NBRC 15438 / GSS1).